Here is a 524-residue protein sequence, read N- to C-terminus: Cytochrome P450 4F3 (524 aa).

Residues 15 to 35 form a helical membrane-spanning segment; sequence AASPWLLLLLVGASCLLAYIL. Residue Cys-468 participates in heme binding.

It belongs to the cytochrome P450 family. Heme serves as cofactor.

Its subcellular location is the endoplasmic reticulum membrane. It localises to the microsome membrane. It carries out the reaction leukotriene B4 + reduced [NADPH--hemoprotein reductase] + O2 = 18-hydroxy-leukotriene B4 + oxidized [NADPH--hemoprotein reductase] + H2O + H(+). It catalyses the reaction leukotriene B4 + reduced [NADPH--hemoprotein reductase] + O2 = 19-hydroxy-leukotriene B4 + oxidized [NADPH--hemoprotein reductase] + H2O + H(+). The protein operates within lipid metabolism; leukotriene B4 degradation. A cytochrome P450 monooxygenase involved in the metabolism of the pro-inflammatory lipid mediator leukotriene B4 (LTB4). Hydroxylates at the omega-1 and omega-2 positions LTB4. This oxidation step leads to LTB4 inactivation, which is postulated to be a crucial part of the resolution of inflammation. Mechanistically, uses molecular oxygen inserting one oxygen atom into a substrate, and reducing the second into a water molecule, with two electrons provided by NADPH via cytochrome P450 reductase (CPR; NADPH-ferrihemoprotein reductase). This Rattus norvegicus (Rat) protein is Cytochrome P450 4F3.